We begin with the raw amino-acid sequence, 357 residues long: Peptide chain release factor 1 (357 aa).

Gln234 bears the N5-methylglutamine mark. The tract at residues 283-313 (SKKQEQRSSNRKQQVGSGDRSERIRTYNFPQ) is disordered.

The protein belongs to the prokaryotic/mitochondrial release factor family. In terms of processing, methylated by PrmC. Methylation increases the termination efficiency of RF1.

Its subcellular location is the cytoplasm. Peptide chain release factor 1 directs the termination of translation in response to the peptide chain termination codons UAG and UAA. This is Peptide chain release factor 1 from Borrelia garinii subsp. bavariensis (strain ATCC BAA-2496 / DSM 23469 / PBi) (Borreliella bavariensis).